The chain runs to 263 residues: N-glycosylase/DNA lyase (263 aa).

Gln-43, Ser-71, and Trp-82 together coordinate 8-oxoguanine. Residues 139-204 (RRYYFENMMG…EDVRIKAYTE (66 aa)) form a helix-hairpin-helix region. Catalysis depends on Lys-164, which acts as the Schiff-base intermediate with DNA. The 8-oxoguanine site is built by Phe-168 and Pro-194. Asp-196 is an active-site residue. 8-oxoguanine-binding residues include Asp-230 and Trp-234.

Belongs to the archaeal N-glycosylase/DNA lyase (AGOG) family.

The enzyme catalyses 2'-deoxyribonucleotide-(2'-deoxyribose 5'-phosphate)-2'-deoxyribonucleotide-DNA = a 3'-end 2'-deoxyribonucleotide-(2,3-dehydro-2,3-deoxyribose 5'-phosphate)-DNA + a 5'-end 5'-phospho-2'-deoxyribonucleoside-DNA + H(+). Its function is as follows. DNA repair enzyme that is part of the base excision repair (BER) pathway; protects from oxidative damage by removing the major product of DNA oxidation, 8-oxoguanine (GO), from single- and double-stranded DNA substrates. The protein is N-glycosylase/DNA lyase of Thermococcus kodakarensis (strain ATCC BAA-918 / JCM 12380 / KOD1) (Pyrococcus kodakaraensis (strain KOD1)).